We begin with the raw amino-acid sequence, 278 residues long: Non-haem bromoperoxidase BPO-A2 (278 aa).

An AB hydrolase-1 domain is found at 26-264 (PVVLIHGFPL…GAPHGLLWTH (239 aa)). Residues Ser99, Asp229, and His258 contribute to the active site.

This sequence belongs to the AB hydrolase superfamily. Bacterial non-heme haloperoxidase / perhydrolase family. Homotrimer.

Its function is as follows. May be a chlorinating enzyme involved in 7-chlorotetracycline biosynthesis. This is Non-haem bromoperoxidase BPO-A2 (bpoA2) from Kitasatospora aureofaciens (Streptomyces aureofaciens).